The chain runs to 360 residues: MPKKILFTGGGTVGHVTLNLILIPKFIKDGWEVHYIGDKNGIEHTEIEKSGLDVTFHAIATGKLRRYFSWQNLADVFKVALGLLQSLFIVAKLRPQALFSKGGFVSVPPVVAAKLLGKPVFIHESDRSMGLANKIAYKFATTMYTTFEQEDQLSKVKHLGAVTKVFKDTNQMPESTQLEAVKEYFSRDLKTLLFIGGSAGAHVFNQFISDHPELKQRYNIINITGDPHLNELSSHLYRVDYVTDLYQPLMAMADLVVTRGGSNTLFELLAMAKLHLIVPLGKEASRGDQLENATYFEKRGYAKQLQEPDLTLHNFDQAMADLFEHQADYEATMLATKEIQSPDFFYDLLRADISSAIKEK.

The UDP-N-acetyl-alpha-D-glucosamine site is built by S198 and Q289.

Belongs to the glycosyltransferase 28 family. MurG subfamily.

The protein resides in the cell membrane. The catalysed reaction is Mur2Ac(oyl-L-Ala-gamma-D-Glu-L-Lys-D-Ala-D-Ala)-di-trans,octa-cis-undecaprenyl diphosphate + UDP-N-acetyl-alpha-D-glucosamine = beta-D-GlcNAc-(1-&gt;4)-Mur2Ac(oyl-L-Ala-gamma-D-Glu-L-Lys-D-Ala-D-Ala)-di-trans,octa-cis-undecaprenyl diphosphate + UDP + H(+). The protein operates within cell wall biogenesis; peptidoglycan biosynthesis. In terms of biological role, cell wall formation. Catalyzes the transfer of a GlcNAc subunit on undecaprenyl-pyrophosphoryl-MurNAc-pentapeptide (lipid intermediate I) to form undecaprenyl-pyrophosphoryl-MurNAc-(pentapeptide)GlcNAc (lipid intermediate II). The polypeptide is UDP-N-acetylglucosamine--N-acetylmuramyl-(pentapeptide) pyrophosphoryl-undecaprenol N-acetylglucosamine transferase (Streptococcus pyogenes serotype M4 (strain MGAS10750)).